A 127-amino-acid polypeptide reads, in one-letter code: Probable soluble cytochrome b562 1 (127 aa).

The first 21 residues, 1–21 (MRKIPIIAGVFSLLITSCTFA), serve as a signal peptide directing secretion. Heme b contacts are provided by Met28 and His123.

Belongs to the cytochrome b562 family. It depends on heme b as a cofactor.

It is found in the periplasm. Its function is as follows. Electron-transport protein of unknown function. The chain is Probable soluble cytochrome b562 1 (cybC1) from Yersinia pestis.